The chain runs to 79 residues: WAP four-disulfide core domain protein 10A (79 aa).

A signal peptide spans 1–21 (MAPQTLLPVLVLCVLLLQAQG). The WAP domain occupies 34–79 (LSPEIKVCQQQPKLYLCKHLCESHRDCQANNICCSTYCGNVCMSIL). 4 disulfides stabilise this stretch: Cys-41–Cys-67, Cys-50–Cys-71, Cys-54–Cys-66, and Cys-60–Cys-75.

Its subcellular location is the secreted. This chain is WAP four-disulfide core domain protein 10A (WFDC10A), found in Homo sapiens (Human).